A 671-amino-acid polypeptide reads, in one-letter code: UvrABC system protein B (671 aa).

The region spanning 25 to 412 (EGIEAGLAHQ…AGRVVEQVVR (388 aa)) is the Helicase ATP-binding domain. Position 38-45 (38-45 (GVTGSGKT)) interacts with ATP. Positions 91 to 114 (YYDYYQPEAYVPSSDTFIEKDASI) match the Beta-hairpin motif. The Helicase C-terminal domain maps to 429 to 582 (QVDDLLSEIT…QIAFNLANGI (154 aa)). The disordered stretch occupies residues 601-623 (PGSRSKKRKGMAKAAEENARYEN). Over residues 614–623 (AAEENARYEN) the composition is skewed to basic and acidic residues. Positions 632-667 (TKRIRQLEEKMYQLARDLEFEAAAQMRDEITKLRER) constitute a UVR domain.

Belongs to the UvrB family. Forms a heterotetramer with UvrA during the search for lesions. Interacts with UvrC in an incision complex.

It localises to the cytoplasm. In terms of biological role, the UvrABC repair system catalyzes the recognition and processing of DNA lesions. A damage recognition complex composed of 2 UvrA and 2 UvrB subunits scans DNA for abnormalities. Upon binding of the UvrA(2)B(2) complex to a putative damaged site, the DNA wraps around one UvrB monomer. DNA wrap is dependent on ATP binding by UvrB and probably causes local melting of the DNA helix, facilitating insertion of UvrB beta-hairpin between the DNA strands. Then UvrB probes one DNA strand for the presence of a lesion. If a lesion is found the UvrA subunits dissociate and the UvrB-DNA preincision complex is formed. This complex is subsequently bound by UvrC and the second UvrB is released. If no lesion is found, the DNA wraps around the other UvrB subunit that will check the other stand for damage. This chain is UvrABC system protein B, found in Pseudomonas fluorescens (strain ATCC BAA-477 / NRRL B-23932 / Pf-5).